The following is a 441-amino-acid chain: Polyketide methyltransferase ustM (441 aa).

Residues 266–368 (LEVGAGLGGT…VRKLLRGGGF (103 aa)) form a methyltransferase (CMeT) domain region.

Belongs to the methyltransferase superfamily.

It functions in the pathway secondary metabolite biosynthesis. Its function is as follows. Polyketide methyltransferase; part of the gene cluster that mediates the biosynthesis of ustilaginoidins, dimeric gamma-naphthopyrones isolated from different fungal species. The first step in the biosynthesis of ustilaginoidins is the production of gamma-naphthopyrone precursor YWA1 by the non-reducing polyketide synthase ustP, via condensation of one acetyl-CoA starter unit with 6 malonyl-CoA units. YWA1 is then probably substrate of the ustZ to yield norrubrofusarin via a dehydration reaction. A key enzyme in the biosynthetic pathway is the laccase ustL, which catalyzes the oxidative dimerization of norrubrofusarin to ustilaginoidin A. It can produce the M- and P-atropisomers in varying amounts, depending on the reaction conditions. For the biosynthesis of 3-methylustilaginoid in derivatives such as chaetochromin A, a methylated derivative of YWA1 is required. The C-methylation is considered to be catalyzed by ustM, the phosphopantetheine attachment site of which indicates that it acts on the growing polyketide chain before release of the product. For the biosynthesis of chaetochromin A, it is assumed that saturation of the D2 double bond takes place before dimerization, and is probably catalyzed by an external reductase because no candidate gene was identified within the cluster. This Ustilaginoidea virens (Rice false smut fungus) protein is Polyketide methyltransferase ustM.